Reading from the N-terminus, the 131-residue chain is uncharacterized protein (131 aa).

The next 2 membrane-spanning stretches (helical) occupy residues 5-25 and 34-54; these read VQPIIAVLIALGAFGFLYVLV and MAVTVIVAGIIIYFIVKYVMN. The interval 62 to 131 is disordered; it reads AAFKKAAKQS…KNKKKNRALF (70 aa). Composition is skewed to basic residues over residues 66–92 and 122–131; these read KAAKQSRRRMKEQKAKHRAGHKGRVSH and KNKKKNRALF.

It is found in the cell membrane. This is an uncharacterized protein from Bacillus subtilis (strain 168).